A 400-amino-acid chain; its full sequence is 3-phenylpropionate/cinnamic acid dioxygenase ferredoxin--NAD(+) reductase component (400 aa).

Residue 5-36 coordinates FAD; it reads TIIIVGGGQAAAMAAASLRQQGFTGELHLFSD. 146-174 is an NAD(+) binding site; the sequence is SVVIVGAGTIGLELAASATQRRCKVTVIE.

The protein belongs to the bacterial ring-hydroxylating dioxygenase ferredoxin reductase family. As to quaternary structure, this dioxygenase system consists of four proteins: the two subunits of the hydroxylase component (HcaE and HcaF), a ferredoxin (HcaC) and a ferredoxin reductase (HcaD). FAD is required as a cofactor.

It catalyses the reaction 2 reduced [2Fe-2S]-[ferredoxin] + NAD(+) + H(+) = 2 oxidized [2Fe-2S]-[ferredoxin] + NADH. It functions in the pathway aromatic compound metabolism; 3-phenylpropanoate degradation. Part of the multicomponent 3-phenylpropionate dioxygenase, that converts 3-phenylpropionic acid (PP) and cinnamic acid (CI) into 3-phenylpropionate-dihydrodiol (PP-dihydrodiol) and cinnamic acid-dihydrodiol (CI-dihydrodiol), respectively. This Shigella sonnei (strain Ss046) protein is 3-phenylpropionate/cinnamic acid dioxygenase ferredoxin--NAD(+) reductase component.